The primary structure comprises 145 residues: Ventricular natriuretic peptide (145 aa).

An N-terminal signal peptide occupies residues 1 to 24 (MRMGKIAVGYGFLLLLVFQLGVRA). C117 and C133 form a disulfide bridge.

This sequence belongs to the natriuretic peptide family. As to expression, heart atrium and ventricle, and to a very low extent in brain.

It localises to the secreted. Exhibits natriuretic and vasodepressor activity. The sequence is that of Ventricular natriuretic peptide (vnp) from Acipenser transmontanus (White sturgeon).